The chain runs to 117 residues: Large ribosomal subunit protein bL20 (117 aa).

Belongs to the bacterial ribosomal protein bL20 family.

Binds directly to 23S ribosomal RNA and is necessary for the in vitro assembly process of the 50S ribosomal subunit. It is not involved in the protein synthesizing functions of that subunit. The polypeptide is Large ribosomal subunit protein bL20 (Roseiflexus castenholzii (strain DSM 13941 / HLO8)).